Reading from the N-terminus, the 332-residue chain is Glucokinase (332 aa).

Residue 15-20 (ADIGGT) coordinates ATP.

The protein belongs to the bacterial glucokinase family.

The protein resides in the cytoplasm. It catalyses the reaction D-glucose + ATP = D-glucose 6-phosphate + ADP + H(+). This chain is Glucokinase, found in Campylobacter jejuni subsp. doylei (strain ATCC BAA-1458 / RM4099 / 269.97).